An 86-amino-acid chain; its full sequence is Large ribosomal subunit protein bL27 (86 aa).

Residues 1–26 (MATKKAGGSSRNGRDSAGRRLGVKKS) form a disordered region.

It belongs to the bacterial ribosomal protein bL27 family.

This chain is Large ribosomal subunit protein bL27, found in Rickettsia akari (strain Hartford).